A 160-amino-acid polypeptide reads, in one-letter code: MIP18 family protein F45G2.10 (160 aa).

The disordered stretch occupies residues Met1–Val32.

This sequence belongs to the MIP18 family.

Functionally, may play a role in chromosome segregation through establishment of sister chromatid cohesion. In Caenorhabditis elegans, this protein is MIP18 family protein F45G2.10.